A 478-amino-acid polypeptide reads, in one-letter code: Noelin-3 (478 aa).

Positions methionine 1–serine 23 are cleaved as a signal peptide. 5 N-linked (GlcNAc...) asparagine glycosylation sites follow: asparagine 33, asparagine 95, asparagine 179, asparagine 299, and asparagine 465. Residues cysteine 77–leucine 217 adopt a coiled-coil conformation. Residues threonine 218–histidine 470 form the Olfactomedin-like domain. Cysteine 219 and cysteine 401 form a disulfide bridge.

Peripherally associated with AMPAR complex. AMPAR complex consists of an inner core made of 4 pore-forming GluA/GRIA proteins (GRIA1, GRIA2, GRIA3 and GRIA4) and 4 major auxiliary subunits arranged in a twofold symmetry. One of the two pairs of distinct binding sites is occupied either by CNIH2, CNIH3 or CACNG2, CACNG3. The other harbors CACNG2, CACNG3, CACNG4, CACNG8 or GSG1L. This inner core of AMPAR complex is complemented by outer core constituents binding directly to the GluA/GRIA proteins at sites distinct from the interaction sites of the inner core constituents. Outer core constituents include at least PRRT1, PRRT2, CKAMP44/SHISA9, FRRS1L and NRN1. The proteins of the inner and outer core serve as a platform for other, more peripherally associated AMPAR constituents, including OLFM3. Alone or in combination, these auxiliary subunits control the gating and pharmacology of the AMPAR complex and profoundly impact their biogenesis and protein processing. Homodimer. Interacts with MYOC. Interacts with OLFM2. In terms of tissue distribution, in the eye, expressed in trabecular meshwork and neural retina; in non-ocular tissues, expressed in brain and lung.

Its subcellular location is the secreted. It localises to the synapse. The polypeptide is Noelin-3 (OLFM3) (Homo sapiens (Human)).